Consider the following 296-residue polypeptide: tRNA uridine(34) hydroxylase (296 aa).

Residues 121–215 (AQPDVAVIDT…YLEDIPQDQS (95 aa)) form the Rhodanese domain. C175 (cysteine persulfide intermediate) is an active-site residue.

It belongs to the TrhO family.

The enzyme catalyses uridine(34) in tRNA + AH2 + O2 = 5-hydroxyuridine(34) in tRNA + A + H2O. Functionally, catalyzes oxygen-dependent 5-hydroxyuridine (ho5U) modification at position 34 in tRNAs. The protein is tRNA uridine(34) hydroxylase of Roseobacter denitrificans (strain ATCC 33942 / OCh 114) (Erythrobacter sp. (strain OCh 114)).